The following is a 589-amino-acid chain: MRAGLVLVDQLIRSGVREAVLCPGSRNSPLNLAFVEAERVGRVRLHVRTDERSAAFLALGLAKVSRRPVPVVMTSGTAVANCLPAMVEATLSGVPLVVLSANRPLSMLGSGANQTIDQAEIFGTHSVCTLNTGELALEGAAAGAAGELRDLVRKLINAATDPIDGGGAHLDVPLREPLVPPTLDELSLWAGEIAAAEDAATTEGAHDSHAPSQPTRGPRKLPYGQVEVDLSRRTLVIAGSVSDVAWARSIMDELADVPTVAEPVAPAPDFPVHSAAVDMFSTQVVSDGEHSAVTIPEQIVVIGRPTLHRGVTKLLANKDINVIALSDTRNVTDVFDNVDEVGSTVRPRGEQPESWLQVARAISDMGVNQVRDGLAEREPFTAVHAVAVVADALRDGDLLVLGASTAVRDASRAGLPFDGVQAIANRGAAGIDGTISTAVGAAMAHAHADPTAIRAPRTIAVMGDLTFAHDLGGLNIGPLEPRPDNLLIVLTNDSGGGIFETLEPGAENLRTFADGTAAFERVFGTPLDLDFAELCAGFGVEHKLATSVEELATVIDEHAEIGGSGITVLEVKVSRRGRQEIEKRIAGTR.

The interval 198–222 (DAATTEGAHDSHAPSQPTRGPRKLP) is disordered.

It belongs to the TPP enzyme family. MenD subfamily. Homodimer. Mg(2+) serves as cofactor. It depends on Mn(2+) as a cofactor. The cofactor is thiamine diphosphate.

The enzyme catalyses isochorismate + 2-oxoglutarate + H(+) = 5-enolpyruvoyl-6-hydroxy-2-succinyl-cyclohex-3-ene-1-carboxylate + CO2. It participates in quinol/quinone metabolism; 1,4-dihydroxy-2-naphthoate biosynthesis; 1,4-dihydroxy-2-naphthoate from chorismate: step 2/7. Its pathway is quinol/quinone metabolism; menaquinone biosynthesis. Its function is as follows. Catalyzes the thiamine diphosphate-dependent decarboxylation of 2-oxoglutarate and the subsequent addition of the resulting succinic semialdehyde-thiamine pyrophosphate anion to isochorismate to yield 2-succinyl-5-enolpyruvyl-6-hydroxy-3-cyclohexene-1-carboxylate (SEPHCHC). In Corynebacterium jeikeium (strain K411), this protein is 2-succinyl-5-enolpyruvyl-6-hydroxy-3-cyclohexene-1-carboxylate synthase.